The primary structure comprises 432 residues: Muscle cell intermediate filament protein OV71 (432 aa).

Positions 1-111 are coil 1B; sequence KLIDELEEYK…RVHDQEISEL (111 aa). In terms of domain architecture, IF rod spans 1–277; the sequence is KLIDELEEYK…KMLEGEENRA (277 aa). Residues 112–128 form a linker 12 region; it reads QAMAARDTTSENREYFK. The coil 2 stretch occupies residues 129 to 277; it reads NELSSAIRDI…KMLEGEENRA (149 aa). The tail stretch occupies residues 278-432; the sequence is GLRQLVEQVV…HIQRSSHTIS (155 aa). In terms of domain architecture, LTD spans 310-427; the sequence is SRTSFQRSAK…EERASHIQRS (118 aa).

The protein belongs to the intermediate filament family.

The protein is Muscle cell intermediate filament protein OV71 (OV71) of Onchocerca volvulus.